We begin with the raw amino-acid sequence, 912 residues long: Protein translocase subunit SecA (912 aa).

Residues Gln-87, 105-109 (GEGKT), and Asp-509 contribute to the ATP site. A compositionally biased stretch (basic and acidic residues) spans 847–859 (RERAVSQPVHEDA). The segment at 847 to 912 (RERAVSQPVH…KYKHCHGKLN (66 aa)) is disordered. The segment covering 867 to 878 (AESEEASGESAD) has biased composition (acidic residues). Over residues 881–892 (QPVRRDGPKVGR) the composition is skewed to basic and acidic residues. Zn(2+) is bound by residues Cys-896, Cys-898, Cys-907, and His-908. The segment covering 902 to 912 (KKYKHCHGKLN) has biased composition (basic residues).

The protein belongs to the SecA family. In terms of assembly, monomer and homodimer. Part of the essential Sec protein translocation apparatus which comprises SecA, SecYEG and auxiliary proteins SecDF-YajC and YidC. Zn(2+) serves as cofactor.

It is found in the cell inner membrane. It localises to the cytoplasm. It carries out the reaction ATP + H2O + cellular proteinSide 1 = ADP + phosphate + cellular proteinSide 2.. Its function is as follows. Part of the Sec protein translocase complex. Interacts with the SecYEG preprotein conducting channel. Has a central role in coupling the hydrolysis of ATP to the transfer of proteins into and across the cell membrane, serving both as a receptor for the preprotein-SecB complex and as an ATP-driven molecular motor driving the stepwise translocation of polypeptide chains across the membrane. The polypeptide is Protein translocase subunit SecA (Chromohalobacter salexigens (strain ATCC BAA-138 / DSM 3043 / CIP 106854 / NCIMB 13768 / 1H11)).